A 528-amino-acid polypeptide reads, in one-letter code: Probable feruloyl esterase B-1 (528 aa).

An N-terminal signal peptide occupies residues 1 to 19 (MMWWFLLIGLASAAATASS). Cystine bridges form between Cys-29/Cys-78, Cys-64/Cys-117, Cys-190/Cys-445, Cys-259/Cys-276, Cys-285/Cys-295, and Cys-505/Cys-527. Asn-83 and Asn-101 each carry an N-linked (GlcNAc...) asparagine glycan. Catalysis depends on Ser-191, which acts as the Acyl-ester intermediate. Positions 260, 263, 265, 267, and 269 each coordinate Ca(2+). Residues Asn-286, Asn-354, and Asn-385 are each glycosylated (N-linked (GlcNAc...) asparagine). Catalysis depends on charge relay system residues Asp-404 and His-444.

This sequence belongs to the tannase family.

It localises to the secreted. The enzyme catalyses feruloyl-polysaccharide + H2O = ferulate + polysaccharide.. Its function is as follows. Involved in degradation of plant cell walls. Hydrolyzes the feruloyl-arabinose ester bond in arabinoxylans as well as the feruloyl-galactose and feruloyl-arabinose ester bonds in pectin. This chain is Probable feruloyl esterase B-1 (faeB-1), found in Aspergillus fumigatus (strain ATCC MYA-4609 / CBS 101355 / FGSC A1100 / Af293) (Neosartorya fumigata).